The primary structure comprises 642 residues: Threonine--tRNA ligase (642 aa).

The TGS domain occupies 1–61; the sequence is MPVITLPDGS…ESDAQLAIIT (61 aa). Residues 243 to 534 form a catalytic region; sequence DHRKIGKQLD…LTEEYAGFFP (292 aa). Residues C334, H385, and H511 each contribute to the Zn(2+) site.

The protein belongs to the class-II aminoacyl-tRNA synthetase family. As to quaternary structure, homodimer. Requires Zn(2+) as cofactor.

Its subcellular location is the cytoplasm. It carries out the reaction tRNA(Thr) + L-threonine + ATP = L-threonyl-tRNA(Thr) + AMP + diphosphate + H(+). In terms of biological role, catalyzes the attachment of threonine to tRNA(Thr) in a two-step reaction: L-threonine is first activated by ATP to form Thr-AMP and then transferred to the acceptor end of tRNA(Thr). Also edits incorrectly charged L-seryl-tRNA(Thr). In Yersinia pseudotuberculosis serotype O:1b (strain IP 31758), this protein is Threonine--tRNA ligase.